The chain runs to 249 residues: MTILFLTMVISYFGCMKAAPMKEANVHGQGNLAYPAVRTHGTLESVNGPRAGSRGLTTTSLADTFEHVIEELLDEDQKVRPNEENHKDADLYTSRVMLSSQVPLEPPLLFLLEEYKNYLDAANMSMRVRRHSDPARRGELSVCDSISEWVTAADKKTAVDMSGGTVTVLEKVPVSKGQLKQYFYETKCNPMGYTKEGCRGIDKRHWNSQCRTTQSYVRALTMDSKKRIGWRFIRIDTSCVCTLTIKRGR.

An N-terminal signal peptide occupies residues 1–18 (MTILFLTMVISYFGCMKA). Residues 19-130 (APMKEANVHG…AANMSMRVRR (112 aa)) constitute a propeptide that is removed on maturation. N-linked (GlcNAc...) asparagine glycosylation is present at N123. 3 disulfides stabilise this stretch: C143-C210, C188-C239, and C198-C241.

Belongs to the NGF-beta family. Monomers and homodimers. Binds to NTRK2/TRKB. Can form heterodimers with other neurotrophin family members, such as NTF3 and NTF4 (in vitro), but the physiological relevance of this is not clear. BDNF precursor form: interacts with the heterodimer formed by NGFR and SORCS2. Mature BDNF has much lower affinity for the heterodimer formed by NGFR and SORCS2. In terms of processing, N-glycosylated and glycosulfated, contrary to mature BDNF. Mature BDNF is produced by proteolytic removal of the propeptide, catalyzed by a FURIN family member. In addition, the precursor form is proteolytically cleaved within the propeptide, but this is not an obligatory intermediate for the production of mature BDNF. Can be converted into mature BDNF by plasmin (PLG).

The protein localises to the secreted. Important signaling molecule that activates signaling cascades downstream of NTRK2. During development, promotes the survival and differentiation of selected neuronal populations of the peripheral and central nervous systems. Participates in axonal growth, pathfinding and in the modulation of dendritic growth and morphology. Major regulator of synaptic transmission and plasticity at adult synapses in many regions of the CNS. The versatility of BDNF is emphasized by its contribution to a range of adaptive neuronal responses including long-term potentiation (LTP), long-term depression (LTD), certain forms of short-term synaptic plasticity, as well as homeostatic regulation of intrinsic neuronal excitability. Its function is as follows. Important signaling molecule that activates signaling cascades downstream of NTRK2. Activates signaling cascades via the heterodimeric receptor formed by NGFR and SORCS2. Signaling via NGFR and SORCS2 plays a role in synaptic plasticity and long-term depression (LTD). Binding to NGFR and SORCS2 promotes neuronal apoptosis. Promotes neuronal growth cone collapse. The polypeptide is Neurotrophic factor BDNF precursor form (Bdnf) (Rattus norvegicus (Rat)).